The primary structure comprises 254 residues: Vitamin B12 import ATP-binding protein BtuD (254 aa).

In terms of domain architecture, ABC transporter spans 3–239; that stretch reads INYISVGNRL…ENLQQVFETP (237 aa). An ATP-binding site is contributed by 29–36; sequence GPNGSGKS.

The protein belongs to the ABC transporter superfamily. Vitamin B12 importer (TC 3.A.1.13.1) family. The complex is composed of two ATP-binding proteins (BtuD), two transmembrane proteins (BtuC) and a solute-binding protein (BtuF).

Its subcellular location is the cell inner membrane. The enzyme catalyses an R-cob(III)alamin(out) + ATP + H2O = an R-cob(III)alamin(in) + ADP + phosphate + H(+). Functionally, part of the ABC transporter complex BtuCDF involved in vitamin B12 import. Responsible for energy coupling to the transport system. The sequence is that of Vitamin B12 import ATP-binding protein BtuD from Vibrio vulnificus (strain CMCP6).